Reading from the N-terminus, the 180-residue chain is Telokin-like protein 20 (180 aa).

Residues 112 to 180 (SKTDAAVHTS…KQKLDNAKQD (69 aa)) form a disordered region. The segment covering 156–165 (DFEENIDDGD) has biased composition (acidic residues).

The sequence is that of Telokin-like protein 20 (TLP20) from Lepidoptera (butterflies and moths).